A 440-amino-acid polypeptide reads, in one-letter code: Chromosomal replication initiator protein DnaA (440 aa).

A domain I, interacts with DnaA modulators region spans residues 1–69; the sequence is MKERILQEIK…VKVVLGNDAT (69 aa). The domain II stretch occupies residues 69-96; that stretch reads TFEITYEAFEPHSSYSEPLVKKRAVLLT. The interval 97–313 is domain III, AAA+ region; the sequence is PLNPDYTFEN…GAIIKLLVYK (217 aa). Val108, Asn113, Gly140, Leu141, Gly142, Lys143, Thr144, His145, and Arg300 together coordinate ADP. Gly140 provides a ligand contact to ATP. The ATP site is built by Gly142, Lys143, and Thr144. Thr144 provides a ligand contact to Mg(2+). Residues 314 to 440 are domain IV, binds dsDNA; it reads ETTGKEVDLK…GEISRRALSG (127 aa).

The protein belongs to the DnaA family. As to quaternary structure, oligomerizes as a right-handed, spiral filament on DNA at oriC.

The protein resides in the cytoplasm. Plays an essential role in the initiation and regulation of chromosomal replication. ATP-DnaA binds to the origin of replication (oriC) to initiate formation of the DNA replication initiation complex once per cell cycle. Binds the DnaA box (a 9 base pair repeat at the origin) and separates the double-stranded (ds)DNA. Forms a right-handed helical filament on oriC DNA; dsDNA binds to the exterior of the filament while single-stranded (ss)DNA is stabiized in the filament's interior. The ATP-DnaA-oriC complex binds and stabilizes one strand of the AT-rich DNA unwinding element (DUE), permitting loading of DNA polymerase. After initiation quickly degrades to an ADP-DnaA complex that is not apt for DNA replication. Binds acidic phospholipids. In terms of biological role, the DnaA box consensus is 5'-[ATC][AT]AC[CT]TACCA[CT][CTA]-3' in this bacterium. Mutagenesis of residues that line the central pore blocks dsDNA separation. This chain is Chromosomal replication initiator protein DnaA, found in Thermotoga maritima (strain ATCC 43589 / DSM 3109 / JCM 10099 / NBRC 100826 / MSB8).